We begin with the raw amino-acid sequence, 617 residues long: Arrestin domain-containing protein B (617 aa).

Positions 1-109 (MDNRGLRLFI…ATFGQTDKWL (109 aa)) constitute a C2 domain. The Ca(2+) site is built by D20, D27, D76, D78, and D84.

This sequence belongs to the arrestin family. Ca(2+) serves as cofactor.

This chain is Arrestin domain-containing protein B (adcB), found in Dictyostelium discoideum (Social amoeba).